A 377-amino-acid polypeptide reads, in one-letter code: Multiple sugar-binding transport ATP-binding protein MsmK (377 aa).

The ABC transporter domain maps to 4 to 246 (LNLNHIYKKY…PANKFVAGFI (243 aa)). Residue 38 to 45 (GPSGCGKS) participates in ATP binding.

Belongs to the ABC transporter superfamily.

Its subcellular location is the cell membrane. Involved in a binding protein-dependent transport system responsible for the uptake of melibiose, raffinose and isomaltotriose. Probably responsible for energy coupling to the transport system. The protein is Multiple sugar-binding transport ATP-binding protein MsmK (msmK) of Streptococcus mutans serotype c (strain ATCC 700610 / UA159).